The sequence spans 298 residues: Inosose dehydratase (298 aa).

The protein belongs to the IolE/MocC family. Requires glutathione as cofactor. Co(2+) is required as a cofactor. It depends on Mn(2+) as a cofactor.

It carries out the reaction scyllo-inosose = 3D-3,5/4-trihydroxycyclohexane-1,2-dione + H2O. It functions in the pathway polyol metabolism; myo-inositol degradation into acetyl-CoA; acetyl-CoA from myo-inositol: step 2/7. Its function is as follows. Catalyzes the dehydration of inosose (2-keto-myo-inositol, 2KMI or 2,4,6/3,5-pentahydroxycyclohexanone) to 3D-(3,5/4)-trihydroxycyclohexane-1,2-dione (D-2,3-diketo-4-deoxy-epi-inositol). This chain is Inosose dehydratase, found in Clostridium botulinum (strain Eklund 17B / Type B).